A 70-amino-acid polypeptide reads, in one-letter code: Protein SlyX homolog (70 aa).

This sequence belongs to the SlyX family.

The chain is Protein SlyX homolog from Nitrobacter winogradskyi (strain ATCC 25391 / DSM 10237 / CIP 104748 / NCIMB 11846 / Nb-255).